An 81-amino-acid chain; its full sequence is Small ribosomal subunit protein bS16 (81 aa).

It belongs to the bacterial ribosomal protein bS16 family.

The chain is Small ribosomal subunit protein bS16 from Lachnoclostridium phytofermentans (strain ATCC 700394 / DSM 18823 / ISDg) (Clostridium phytofermentans).